The following is a 106-amino-acid chain: UPF0145 protein CKL_2433 (106 aa).

Belongs to the UPF0145 family.

The protein is UPF0145 protein CKL_2433 of Clostridium kluyveri (strain ATCC 8527 / DSM 555 / NBRC 12016 / NCIMB 10680 / K1).